The primary structure comprises 394 residues: MSVQEITIPAPADFHVHLRQGKMSELVTPHVAEGGVSLAYVMPNLVPPITSTQQAMEYLERLRALAPQTMFVGTLYLSPDLTPAEIAKAAQNGVRGVKSYPRGVTTNSDSGIEDYETYYPIFEEMQKHDMVLNLHGELPSNADAGICVLNAEEKFLTHLFKIHGEFPKLKIVLEHATTRKAVEAVKQCGDTVGCTITPHHLELIVDDWAGKPLNFCKPVAKYPDDRQALRDVIRQGHPRFFLGSDSAPHPLANKYPSAVTHGAPGTKASASGSDHLEATGVVSCGCAAGVYTSSILVPLCATLLEAFGALDQLANYVSINGRNFYGYNDDQHAKHGSIKLRKVRSRSSISPAAATVPAVYVHPEFREVPDSDASKVQVVPFWAGKCLGWEIVRS.

Positions 15, 17, 98, 135, 175, and 245 each coordinate Zn(2+). Residue Lys98 is modified to N6-carboxylysine.

The protein belongs to the metallo-dependent hydrolases superfamily. DHOase family. Class II DHOase subfamily. Zn(2+) is required as a cofactor.

It carries out the reaction (S)-dihydroorotate + H2O = N-carbamoyl-L-aspartate + H(+). It functions in the pathway pyrimidine metabolism; UMP biosynthesis via de novo pathway; (S)-dihydroorotate from bicarbonate: step 3/3. The chain is Dihydroorotase (PYR3) from Mycosarcoma maydis (Corn smut fungus).